Here is a 283-residue protein sequence, read N- to C-terminus: Protein canopy homolog 3 (283 aa).

A signal peptide spans 1-35; it reads MEPLPEPTSRPRLRPRPRCLLLLPLLLLLLLLLPA. The Saposin B-type domain maps to 55–276; sequence SKCEVCKYVA…EGIQKASPLT (222 aa). The N-linked (GlcNAc...) asparagine glycan is linked to asparagine 161. A coiled-coil region spans residues 161 to 187; sequence NETSAEVADLKKQCDVLVEEFEEVIED. Positions 223–283 are disordered; it reads KGDTAALGGK…PLTHSPPDEL (61 aa).

Belongs to the canopy family. As to quaternary structure, interacts with HSP90B1; this interaction is disrupted in the presence of ATP. Interacts with TLR1, TLR2, TLR4 and TLR9.

The protein resides in the endoplasmic reticulum. Toll-like receptor (TLR)-specific co-chaperone for HSP90B1. Required for proper TLR folding, except that of TLR3, and hence controls TLR exit from the endoplasmic reticulum. Consequently, required for both innate and adaptive immune responses. The sequence is that of Protein canopy homolog 3 (CNPY3) from Sus scrofa (Pig).